Reading from the N-terminus, the 507-residue chain is Maturase K (507 aa).

The protein belongs to the intron maturase 2 family. MatK subfamily.

Its subcellular location is the plastid. The protein localises to the chloroplast. Its function is as follows. Usually encoded in the trnK tRNA gene intron. Probably assists in splicing its own and other chloroplast group II introns. This is Maturase K from Humulus lupulus (European hop).